A 429-amino-acid chain; its full sequence is 28S rRNA (cytosine-C(5))-methyltransferase (429 aa).

Glycine 2 carries the N-acetylglycine modification. Serine 167 is modified (phosphoserine). S-adenosyl-L-methionine contacts are provided by residues 234-240, aspartate 258, arginine 263, and aspartate 305; that span reads CAAPGNK. The Nucleophile role is filled by cysteine 359.

Belongs to the class I-like SAM-binding methyltransferase superfamily. RsmB/NOP family. In terms of tissue distribution, ubiquitous. Detected in placenta, heart and skeletal muscle.

The protein resides in the nucleus. It is found in the nucleolus. It catalyses the reaction cytidine(3782) in 28S rRNA + S-adenosyl-L-methionine = 5-methylcytidine(3782) in 28S rRNA + S-adenosyl-L-homocysteine + H(+). Functionally, S-adenosyl-L-methionine-dependent methyltransferase that specifically methylates the C(5) position of cytosine 3782 (m5C3782) in 28S rRNA. m5C3782 promotes protein translation without affecting ribosome biogenesis and fidelity. Required for corpus callosum and cerebral cortex development. The sequence is that of 28S rRNA (cytosine-C(5))-methyltransferase from Homo sapiens (Human).